Consider the following 259-residue polypeptide: 14-3-3-like protein (259 aa).

Residues 237 to 259 (DTTDDAEDEIREGSKQESGDGQQ) form a disordered region. Positions 247-259 (REGSKQESGDGQQ) are enriched in basic and acidic residues.

It belongs to the 14-3-3 family. As to expression, leaves specific.

This chain is 14-3-3-like protein, found in Solanum tuberosum (Potato).